The primary structure comprises 218 residues: Adenylate kinase (218 aa).

ATP is bound at residue 10–15 (GAGKGT). The tract at residues 30–59 (STGDMLRAAVKAGTPLGLEAKKVMDAGGLV) is NMP. AMP-binding positions include threonine 31, arginine 36, 57–59 (GLV), 85–88 (GFPR), and glutamine 92. Residues 122 to 159 (ERRVHPASGRSYHVRFNPPKAEGVDDVTGEPLVQRDDD) are LID. ATP contacts are provided by residues arginine 123 and 132–133 (SY). Positions 156 and 167 each coordinate AMP. Glycine 203 is an ATP binding site.

The protein belongs to the adenylate kinase family. As to quaternary structure, monomer.

The protein localises to the cytoplasm. It carries out the reaction AMP + ATP = 2 ADP. It participates in purine metabolism; AMP biosynthesis via salvage pathway; AMP from ADP: step 1/1. Catalyzes the reversible transfer of the terminal phosphate group between ATP and AMP. Plays an important role in cellular energy homeostasis and in adenine nucleotide metabolism. The polypeptide is Adenylate kinase (Bordetella pertussis (strain Tohama I / ATCC BAA-589 / NCTC 13251)).